The sequence spans 394 residues: S-adenosylmethionine synthase 3 (394 aa).

Glutamate 11 provides a ligand contact to Mg(2+). Residue histidine 17 coordinates ATP. Glutamate 45 contributes to the K(+) binding site. The L-methionine site is built by glutamate 58 and glutamine 101. Residues 169–171 (DGK), 237–240 (SGRF), aspartate 248, 254–255 (RK), alanine 271, lysine 275, and lysine 279 each bind ATP. Residue aspartate 248 coordinates L-methionine. Lysine 279 lines the L-methionine pocket.

This sequence belongs to the AdoMet synthase family. As to quaternary structure, homotetramer. The cofactor is Mn(2+). Requires Mg(2+) as cofactor. Co(2+) is required as a cofactor. It depends on K(+) as a cofactor.

The protein localises to the cytoplasm. The enzyme catalyses L-methionine + ATP + H2O = S-adenosyl-L-methionine + phosphate + diphosphate. The protein operates within amino-acid biosynthesis; S-adenosyl-L-methionine biosynthesis; S-adenosyl-L-methionine from L-methionine: step 1/1. In terms of biological role, catalyzes the formation of S-adenosylmethionine from methionine and ATP. The reaction comprises two steps that are both catalyzed by the same enzyme: formation of S-adenosylmethionine (AdoMet) and triphosphate, and subsequent hydrolysis of the triphosphate. This Hordeum vulgare (Barley) protein is S-adenosylmethionine synthase 3 (SAM3).